Consider the following 446-residue polypeptide: Na(+)-translocating NADH-quinone reductase subunit A (446 aa).

The protein belongs to the NqrA family. As to quaternary structure, composed of six subunits; NqrA, NqrB, NqrC, NqrD, NqrE and NqrF.

The enzyme catalyses a ubiquinone + n Na(+)(in) + NADH + H(+) = a ubiquinol + n Na(+)(out) + NAD(+). Its activity is regulated as follows. This reaction is tightly coupled to the Na(+) pumping activity and specifically requires Na(+) for activity. Inhibited by korormicin and 2-N-heptyl-4-hydroxyquinoline N-oxide (HQNO). NQR complex catalyzes the reduction of ubiquinone-1 to ubiquinol by two successive reactions, coupled with the transport of Na(+) ions from the cytoplasm to the periplasm. NqrA to NqrE are probably involved in the second step, the conversion of ubisemiquinone to ubiquinol. This chain is Na(+)-translocating NADH-quinone reductase subunit A, found in Vibrio alginolyticus.